A 539-amino-acid chain; its full sequence is Probable 1,4-beta-D-glucan cellobiohydrolase B (539 aa).

The first 26 residues, 1 to 26 (MLPSTISYRIYKNALFFAALFGAVQA), serve as a signal peptide directing secretion. Positions 27–461 (QKVGTSKAEV…SNIKVGPIGS (435 aa)) are catalytic. Asn-90 carries N-linked (GlcNAc...) asparagine glycosylation. Glu-238 serves as the catalytic Nucleophile. Catalysis depends on Glu-243, which acts as the Proton donor. N-linked (GlcNAc...) asparagine glycans are attached at residues Asn-296 and Asn-495. The tract at residues 462–503 (TFNSGGSNPGGSTTTTKPATSTTTTKATTTATTNTTGPTGTG) is thr-rich linker. A compositionally biased stretch (low complexity) spans 462–503 (TFNSGGSNPGGSTTTTKPATSTTTTKATTTATTNTTGPTGTG). The interval 462 to 504 (TFNSGGSNPGGSTTTTKPATSTTTTKATTTATTNTTGPTGTGV) is disordered. The 37-residue stretch at 503–539 (GVAQPWAQCGGIGYSGPTQCAAPYTCTKQNDYYSQCL) folds into the CBM1 domain. 2 cysteine pairs are disulfide-bonded: Cys-511–Cys-528 and Cys-522–Cys-538.

It belongs to the glycosyl hydrolase 7 (cellulase C) family.

Its subcellular location is the secreted. The catalysed reaction is Hydrolysis of (1-&gt;4)-beta-D-glucosidic linkages in cellulose and cellotetraose, releasing cellobiose from the non-reducing ends of the chains.. Its function is as follows. The biological conversion of cellulose to glucose generally requires three types of hydrolytic enzymes: (1) Endoglucanases which cut internal beta-1,4-glucosidic bonds; (2) Exocellobiohydrolases that cut the disaccharide cellobiose from the non-reducing end of the cellulose polymer chain; (3) Beta-1,4-glucosidases which hydrolyze the cellobiose and other short cello-oligosaccharides to glucose. In Aspergillus clavatus (strain ATCC 1007 / CBS 513.65 / DSM 816 / NCTC 3887 / NRRL 1 / QM 1276 / 107), this protein is Probable 1,4-beta-D-glucan cellobiohydrolase B (cbhB).